We begin with the raw amino-acid sequence, 224 residues long: Small ribosomal subunit protein uS13 (224 aa).

Basic and acidic residues predominate over residues 1–17 (MSEKTDKTEKKQKKAEE). Disordered stretches follow at residues 1–64 (MSEK…AEEK) and 184–224 (HERG…EDKK). Low complexity-rich tracts occupy residues 20 to 30 (ETASAEAAPAK) and 38 to 47 (AKPAEGAPAD). Positions 210 to 224 (KKGEQGGAAKKEDKK) are enriched in basic and acidic residues.

The protein belongs to the universal ribosomal protein uS13 family. As to quaternary structure, part of the 30S ribosomal subunit. Forms a loose heterodimer with protein S19. Forms two bridges to the 50S subunit in the 70S ribosome.

In terms of biological role, located at the top of the head of the 30S subunit, it contacts several helices of the 16S rRNA. In the 70S ribosome it contacts the 23S rRNA (bridge B1a) and protein L5 of the 50S subunit (bridge B1b), connecting the 2 subunits; these bridges are implicated in subunit movement. The sequence is that of Small ribosomal subunit protein uS13 from Methanocella arvoryzae (strain DSM 22066 / NBRC 105507 / MRE50).